A 182-amino-acid chain; its full sequence is 5-formyltetrahydrofolate cyclo-ligase (182 aa).

The tract at residues 1 to 21 (MIRQRRRALTPEQQQEMGQQA) is disordered. Polar residues predominate over residues 11–21 (PEQQQEMGQQA). ATP-binding positions include 128–135 (GMGGGFYD) and Asp167.

Belongs to the 5-formyltetrahydrofolate cyclo-ligase family.

It catalyses the reaction (6S)-5-formyl-5,6,7,8-tetrahydrofolate + ATP = (6R)-5,10-methenyltetrahydrofolate + ADP + phosphate. It functions in the pathway one-carbon metabolism; tetrahydrofolate interconversion. Functionally, involved in the removal of 5-formyltetrahydrofolate. In vitro, it is a potent inhibitor of various folate-dependent enzymes in the C1 metabolism network and in vivo it might function as a folate storage. 5-formyltetrahydrofolate is also used as an antifolate rescue agent in cancer chemotherapy. Catalyzes the irreversible ATP-dependent transformation of 5-formyltetrahydrofolate (5-CHO-THF) to form 5,10-methenyltetrahydrofolate (5,10-CH=THF). The reverse reaction is catalyzed by the serine hydroxymethyltransferase GlyA (SHMT). The polypeptide is 5-formyltetrahydrofolate cyclo-ligase (ygfA) (Escherichia coli O157:H7).